A 274-amino-acid polypeptide reads, in one-letter code: Phosphoribosylaminoimidazole-succinocarboxamide synthase (274 aa).

The protein belongs to the SAICAR synthetase family.

It catalyses the reaction 5-amino-1-(5-phospho-D-ribosyl)imidazole-4-carboxylate + L-aspartate + ATP = (2S)-2-[5-amino-1-(5-phospho-beta-D-ribosyl)imidazole-4-carboxamido]succinate + ADP + phosphate + 2 H(+). It participates in purine metabolism; IMP biosynthesis via de novo pathway; 5-amino-1-(5-phospho-D-ribosyl)imidazole-4-carboxamide from 5-amino-1-(5-phospho-D-ribosyl)imidazole-4-carboxylate: step 1/2. This is Phosphoribosylaminoimidazole-succinocarboxamide synthase from Nitrosopumilus maritimus (strain SCM1).